A 699-amino-acid polypeptide reads, in one-letter code: Homeobox-leucine zipper protein HDG8 (699 aa).

The tract at residues 1-31 (MDNNGGGSSGNEQYTSGDAKQNGKRTCHRHT) is disordered. A compositionally biased stretch (polar residues) spans 10 to 19 (GNEQYTSGDA). Over residues 22 to 31 (NGKRTCHRHT) the composition is skewed to basic residues. Residues 23–82 (GKRTCHRHTPQQIQRLEAYFKECPHPDERQRNQLCRELKLEPDQIKFWFQNKRTQSKTQE) constitute a DNA-binding region (homeobox). Residues 89 to 149 (LLRGENETLQ…LKDHRDRISN (61 aa)) are a coiled coil. The region spanning 204–438 (AETDMSLLSE…LERMCERMAL (235 aa)) is the START domain.

This sequence belongs to the HD-ZIP homeobox family. Class IV subfamily. In terms of assembly, interacts with ANT. Expressed in the embryo at early stage and in the endosperm.

The protein resides in the nucleus. In terms of biological role, probable transcription factor. This Arabidopsis thaliana (Mouse-ear cress) protein is Homeobox-leucine zipper protein HDG8.